Here is a 433-residue protein sequence, read N- to C-terminus: MLRIITQQADVKAELQRICDRTHDEQVLHKEATVREVLQAVKRQGDKAVLHYTDEFDNQILKAEELRVTGSELDAAYQQVSKELLEAIQLASRQIEAFHRQRVPKSWVHFGDDDIVLGKRYTPVDRAGLYVPGGRAAYVSTVLMNAIPAKVAGVPRIVMATPPGAQKAINPAVLVAAQEVGVQEIYRVGGAQAIAALAYGTETIPKVDVITGPGNIYVTLAKKLVYGTVGIDSLAGPSEVLIIADEGANPVHVATDMLAQAEHDPMAAAILFTTDPALAKNVQVAVERQLVDHPRRIDTEKAIAHYGLIVLVESLDAAAELSNEFAPEHLELEVKDPWAVLPNIRHAGAIFLGYSTPEAVGDYLAGPNHTLPTSGAARYASALSVETFLKHSSIIQYSQTALNKVAGAIDALATAEGLPSHADSVKRRIQQDE.

NAD(+) is bound by residues tyrosine 130, glutamine 192, and asparagine 215. The substrate site is built by serine 238, glutamine 260, and histidine 263. Positions 260 and 263 each coordinate Zn(2+). Catalysis depends on proton acceptor residues glutamate 328 and histidine 329. The substrate site is built by histidine 329, aspartate 362, glutamate 416, and histidine 421. Aspartate 362 lines the Zn(2+) pocket. Residue histidine 421 participates in Zn(2+) binding.

The protein belongs to the histidinol dehydrogenase family. The cofactor is Zn(2+).

The catalysed reaction is L-histidinol + 2 NAD(+) + H2O = L-histidine + 2 NADH + 3 H(+). Its pathway is amino-acid biosynthesis; L-histidine biosynthesis; L-histidine from 5-phospho-alpha-D-ribose 1-diphosphate: step 9/9. In terms of biological role, catalyzes the sequential NAD-dependent oxidations of L-histidinol to L-histidinaldehyde and then to L-histidine. This chain is Histidinol dehydrogenase 2, found in Trichormus variabilis (strain ATCC 29413 / PCC 7937) (Anabaena variabilis).